The sequence spans 518 residues: GRIN2-like protein (518 aa).

2 disordered regions span residues Met1–Thr23 and Gln467–Met500. Residues Lys476–Lys494 are compositionally biased toward basic and acidic residues.

As to quaternary structure, may interact with GNAO1.

Functionally, may be involved in neurite outgrowth. This Gallus gallus (Chicken) protein is GRIN2-like protein.